A 463-amino-acid polypeptide reads, in one-letter code: ATP-dependent protease ATPase subunit HslU (463 aa).

ATP contacts are provided by residues Val-21, 63 to 68 (GVGKTE), Asp-276, Glu-341, and Arg-413.

It belongs to the ClpX chaperone family. HslU subfamily. A double ring-shaped homohexamer of HslV is capped on each side by a ring-shaped HslU homohexamer. The assembly of the HslU/HslV complex is dependent on binding of ATP.

Its subcellular location is the cytoplasm. ATPase subunit of a proteasome-like degradation complex; this subunit has chaperone activity. The binding of ATP and its subsequent hydrolysis by HslU are essential for unfolding of protein substrates subsequently hydrolyzed by HslV. HslU recognizes the N-terminal part of its protein substrates and unfolds these before they are guided to HslV for hydrolysis. The chain is ATP-dependent protease ATPase subunit HslU from Thermotoga sp. (strain RQ2).